The chain runs to 72 residues: PAMP-induced secreted peptide 1 (72 aa).

A signal peptide spans M1–A30. Residues P65 and P67 each carry the 4-hydroxyproline modification.

Post-translationally, contains 4-hydroxyproline; hydroxylated on Pro-65 and Pro-67. In terms of tissue distribution, expressed in guard cells, hydathodes, leaf trichomes, and vascular tissues of leaves and roots.

The protein localises to the secreted. The protein resides in the extracellular space. It is found in the apoplast. Endogenous secreted peptide that acts as elicitor of immune response and positive regulator of defense response. Amplifies the immune response triggered by flg22, the active epitope of bacterial flagellin. Acts as a negative regulator of root growth. This Arabidopsis thaliana (Mouse-ear cress) protein is PAMP-induced secreted peptide 1.